The following is a 665-amino-acid chain: SH3 domain-containing kinase-binding protein 1 (665 aa).

SH3 domains follow at residues 1-58 and 98-157; these read MVEA…EIKK and RRRR…ELSG. Phosphoserine is present on residues serine 156, serine 159, serine 183, and serine 230. The segment at 159–200 is disordered; the sequence is SDELGISQDEQLSKSSLRETTGSESDGGDSSSTKSEGANGTV. Over residues 177-195 the composition is skewed to low complexity; the sequence is ETTGSESDGGDSSSTKSEG. A Phosphothreonine modification is found at threonine 254. The SH3 3 domain maps to 267-328; that stretch reads KSKDYCKVIF…PDNFVKLLPP (62 aa). 2 disordered regions span residues 328–444 and 467–610; these read PDFE…LAGS and DSVV…AAVE. Basic and acidic residues predominate over residues 355–390; sequence TERKHEIKKIPPERPEMLPNRTEEKERPEREPKLDL. Position 436 is a phosphoserine (serine 436). Positions 469–484 are enriched in polar residues; the sequence is VVSSTEKLSHPTTSRP. The segment covering 491–510 has biased composition (low complexity); that stretch reads PPSQSLTSSSLSSPDIFDSP. A phosphoserine mark is found at serine 509, serine 511, and serine 521. The span at 517 to 531 shows a compositional bias: basic and acidic residues; the sequence is EEHISLAHRGVDASK. Residues 535 to 546 show a composition bias toward polar residues; that stretch reads KTVTISQVSDNK. Positions 564–582 are enriched in low complexity; sequence APLSSAAPSPLSSSLGTAG. Serine 587 carries the phosphoserine modification. Positions 602–664 form a coiled coil; sequence AASSQAAVEE…VNDIKKALQS (63 aa).

Can self-associate and form homotetramers. Interacts with CD2, F-actin capping protein, PIK3R3, GRB2, EGFR, MET, BLNK, MAP3K4, PDCD6IP, SPRY2, ARHGAP17, ARHGAP27, MAGI2, CRK, BCAR1, SOS1, ASAP1, ARAP3, HIP1R, SYNJ2, INPP5D and STAP1. Interacts with E3 ubiquitin-protein ligases CBL and CBLB, but does not interact with CBLC. Two molecules of SH3KBP1 seem to bind through their respective SH3 1 domain to one molecule of CBLB. The interaction with CBL or CBLB and EGFR is increased upon EGF stimulation. The interaction with CBL is attenuated by PDCD6IP. Interacts (via SH3 domains) with ARAP1. The interaction is independent of EGF and does not affect ARAP1 GTPase-activating activity but is involved in regulating ubiquitination and endocytic trafficking of EGFR. ARAP1 competes with CBL for binding to SH3KBP1 and prevents interaction of CBL with SH3KBP1; this is likely to regulate SH3KBP1-mediated internalization of EGFR. Interacts through its proline-rich region with the SH3 domain of endophilins SH3GL1, SH3GL2 and SH3GL3. The SH3KBP1-endophilin complex seems to associate with a complex containing the phosphorylated receptor (EGFR or MET) and phosphorylated CBL. Probably associates with ASAP1 and phosphorylated EGFR. Probably part of a complex consisting of at least SH3KBP1, ASAP1 and ARAP3. Interacts with focal adhesion kinases PTK2/FAK1 and PTK2B/PYK2, probably as a dimer. Interacts with DAB2 and probably associates with chathrin through its interaction with DAB2. Part of a complex consisting of SH3KBP1, DAB2, and clathrin heavy chain. DAB2 and clathrin dissociate from SH3KBP1 following growth factor treatment, enabling interaction with CBL. Interacts with DDN and probably associates with MAGI2 through its interaction with DDN. Interacts with the SH3 domains of SRC tyrosine-protein kinases SRC, LCK, LYN, FGR, FYN and HCK. Interacts with TRADD, BIRC2, TRAF1, TRAF2 and TNFR1, and the association with a TNFR1-associated complex upon stimulation with TNF-alpha seems to be mediated by SRC. Interacts (via SH3 domains) with SHKBP1 (via PXXXPR motifs). Interaction with CBL is abolished in the presence of SHKBP1. Interacts (via SH3 domains) with ZFP36 (via extreme C-terminal region). Interacts with MAP3K4; this interaction enhances the association with ZFP36. In terms of assembly, (Microbial infection) Interacts (via SH3 domains) with Chikungunya virus non-structural protein 3 (via C-terminus); this interaction plays a role in initiation of viral replication. Post-translationally, monoubiquitinated by CBL and CBLB after EGF stimulation; probably on its C-terminus. As to expression, ubiquitously expressed. Also expressed in some cancer cell lines.

It localises to the cytoplasm. Its subcellular location is the cytoskeleton. The protein localises to the cytoplasmic vesicle membrane. The protein resides in the synapse. It is found in the synaptosome. It localises to the cell junction. Its subcellular location is the focal adhesion. In terms of biological role, adapter protein involved in regulating diverse signal transduction pathways. Involved in the regulation of endocytosis and lysosomal degradation of ligand-induced receptor tyrosine kinases, including EGFR and MET/hepatocyte growth factor receptor, through an association with CBL and endophilins. The association with CBL, and thus the receptor internalization, may be inhibited by an interaction with PDCD6IP and/or SPRY2. Involved in regulation of ligand-dependent endocytosis of the IgE receptor. Attenuates phosphatidylinositol 3-kinase activity by interaction with its regulatory subunit. May be involved in regulation of cell adhesion; promotes the interaction between TTK2B and PDCD6IP. May be involved in the regulation of cellular stress response via the MAPK pathways through its interaction with MAP3K4. Is involved in modulation of tumor necrosis factor mediated apoptosis. Plays a role in the regulation of cell morphology and cytoskeletal organization. Required in the control of cell shape and migration. Has an essential role in the stimulation of B cell activation. The chain is SH3 domain-containing kinase-binding protein 1 (SH3KBP1) from Homo sapiens (Human).